A 476-amino-acid polypeptide reads, in one-letter code: Probable secreted beta-glucosidase SIM1 (476 aa).

The first 19 residues, 1-19 (MKFSTAVTTLISSGAIVSA), serve as a signal peptide directing secretion. Residues 111 to 203 (ATASTSQGAS…SSSSSSSGSG (93 aa)) show a composition bias toward low complexity. The segment at 111 to 214 (ATASTSQGAS…IYGDLADFSG (104 aa)) is disordered. Residue Asn-423 is glycosylated (N-linked (GlcNAc...) asparagine).

It belongs to the SUN family.

It localises to the secreted. Its subcellular location is the cell wall. In terms of biological role, involved in the remodeling of the cell wall during the various phases of yeast culture development and under various environmental conditions. Required for the maintenance of the CLB5 kinase activity. The protein is Probable secreted beta-glucosidase SIM1 (SIM1) of Saccharomyces cerevisiae (strain ATCC 204508 / S288c) (Baker's yeast).